Consider the following 323-residue polypeptide: L-lactate dehydrogenase 1 (323 aa).

Residues Val18, Asp39, Tyr69, and 83–84 (GA) each bind NAD(+). Positions 86 and 92 each coordinate substrate. NAD(+)-binding positions include Ser105, 122–124 (VAN), and Ser147. Residue 124–127 (NPVD) coordinates substrate. 152-155 (DTGR) provides a ligand contact to substrate. Residue His179 is the Proton acceptor of the active site. Tyr223 carries the phosphotyrosine modification. Position 232 (Thr232) interacts with substrate.

The protein belongs to the LDH/MDH superfamily. LDH family. In terms of assembly, homotetramer.

It localises to the cytoplasm. It catalyses the reaction (S)-lactate + NAD(+) = pyruvate + NADH + H(+). The protein operates within fermentation; pyruvate fermentation to lactate; (S)-lactate from pyruvate: step 1/1. Catalyzes the conversion of lactate to pyruvate. The protein is L-lactate dehydrogenase 1 of Lactobacillus acidophilus (strain ATCC 700396 / NCK56 / N2 / NCFM).